A 426-amino-acid chain; its full sequence is GTPase Obg (426 aa).

An Obg domain is found at 1 to 158; the sequence is MFVDEVEIKV…RSIRLELKLV (158 aa). Positions 159-330 constitute an OBG-type G domain; the sequence is ADVGLIGFPN…LIYYTGDLLK (172 aa). GTP contacts are provided by residues 165 to 172, 190 to 194, 212 to 215, 282 to 285, and 311 to 313; these read GFPNVGKS, FTTLK, DIPG, NKID, and SAA. Positions 172 and 192 each coordinate Mg(2+). The 78-residue stretch at 349–426 folds into the OCT domain; the sequence is DFADEEENIV…IGPMEFEYME (78 aa).

Belongs to the TRAFAC class OBG-HflX-like GTPase superfamily. OBG GTPase family. As to quaternary structure, monomer. Mg(2+) serves as cofactor.

It localises to the cytoplasm. In terms of biological role, an essential GTPase which binds GTP, GDP and possibly (p)ppGpp with moderate affinity, with high nucleotide exchange rates and a fairly low GTP hydrolysis rate. Plays a role in control of the cell cycle, stress response, ribosome biogenesis and in those bacteria that undergo differentiation, in morphogenesis control. The chain is GTPase Obg from Halothermothrix orenii (strain H 168 / OCM 544 / DSM 9562).